Reading from the N-terminus, the 413-residue chain is Putative competence-damage inducible protein (413 aa).

It belongs to the CinA family.

The chain is Putative competence-damage inducible protein from Lacticaseibacillus casei (strain BL23) (Lactobacillus casei).